The primary structure comprises 392 residues: Succinate--CoA ligase [ADP-forming] subunit beta (392 aa).

The ATP-grasp domain maps to 9–247 (KAILRKYGVA…VTEEDPLEVE (239 aa)). Residues K49, 56-58 (GRG), E102, L105, and E110 contribute to the ATP site. Mg(2+) contacts are provided by N202 and D216. Residues N267 and 324–326 (GIL) contribute to the substrate site.

It belongs to the succinate/malate CoA ligase beta subunit family. In terms of assembly, heterotetramer of two alpha and two beta subunits. Mg(2+) serves as cofactor.

The catalysed reaction is succinate + ATP + CoA = succinyl-CoA + ADP + phosphate. It carries out the reaction GTP + succinate + CoA = succinyl-CoA + GDP + phosphate. Its pathway is carbohydrate metabolism; tricarboxylic acid cycle; succinate from succinyl-CoA (ligase route): step 1/1. In terms of biological role, succinyl-CoA synthetase functions in the citric acid cycle (TCA), coupling the hydrolysis of succinyl-CoA to the synthesis of either ATP or GTP and thus represents the only step of substrate-level phosphorylation in the TCA. The beta subunit provides nucleotide specificity of the enzyme and binds the substrate succinate, while the binding sites for coenzyme A and phosphate are found in the alpha subunit. This is Succinate--CoA ligase [ADP-forming] subunit beta from Koribacter versatilis (strain Ellin345).